The sequence spans 698 residues: Long-chain-fatty-acid--CoA ligase 1 (698 aa).

At Met-1 the chain carries N-acetylmethionine. Tyr-9 is modified (3'-nitrotyrosine). Tyr-84 carries the phosphotyrosine modification. The O-linked (GlcNAc) serine glycan is linked to Ser-135. Residues Lys-356 and Lys-386 each carry the N6-acetyllysine modification. Ser-620 carries the phosphoserine modification. Lys-632 is subject to N6-acetyllysine.

This sequence belongs to the ATP-dependent AMP-binding enzyme family. Mg(2+) is required as a cofactor.

The protein localises to the microsome membrane. Its subcellular location is the mitochondrion outer membrane. It is found in the peroxisome membrane. The protein resides in the endoplasmic reticulum membrane. It carries out the reaction a long-chain fatty acid + ATP + CoA = a long-chain fatty acyl-CoA + AMP + diphosphate. It catalyses the reaction (5Z,8Z,11Z,14Z)-eicosatetraenoate + ATP + CoA = (5Z,8Z,11Z,14Z)-eicosatetraenoyl-CoA + AMP + diphosphate. The enzyme catalyses 3,7,11,15-tetramethylhexadecanoate + ATP + CoA = phytanoyl-CoA + AMP + diphosphate. The catalysed reaction is hexadecanoate + ATP + CoA = hexadecanoyl-CoA + AMP + diphosphate. It carries out the reaction (E)-hexadec-2-enoate + ATP + CoA = (2E)-hexadecenoyl-CoA + AMP + diphosphate. It catalyses the reaction 2,6,10,14-tetramethylpentadecanoate + ATP + CoA = pristanoyl-CoA + AMP + diphosphate. The enzyme catalyses 14,15-epoxy-(5Z,8Z,11Z)-eicosatrienoate + ATP + CoA = 14,15-epoxy-(5Z,8Z,11Z)-eicosatrienoyl-CoA + AMP + diphosphate. The catalysed reaction is 5-hydroxy-(6E,8Z,11Z,14Z)-eicosatetraenoate + ATP + CoA = 5-hydroxy-(6E,8Z,11Z,14Z)-eicosatetraenoyl-CoA + AMP + diphosphate. It carries out the reaction 12-hydroxy-(5Z,8Z,10E,14Z)-eicosatetraenoate + ATP + CoA = 12-hydroxy-(5Z,8Z,10E,14Z)-eicosatetraenoyl-CoA + AMP + diphosphate. It catalyses the reaction 15-hydroxy-(5Z,8Z,11Z,13E)-eicosatetraenoate + ATP + CoA = 15-hydroxy-(5Z,8Z,11Z,13E)-eicosatetraenoyl-CoA + AMP + diphosphate. The enzyme catalyses (9Z)-octadecenoate + ATP + CoA = (9Z)-octadecenoyl-CoA + AMP + diphosphate. With respect to regulation, inhibited at high temperature and by arachidonate. Catalyzes the conversion of long-chain fatty acids to their active form acyl-CoAs for both synthesis of cellular lipids, and degradation via beta-oxidation. Preferentially uses palmitoleate, oleate and linoleate. Preferentially activates arachidonate than epoxyeicosatrienoic acids (EETs) or hydroxyeicosatrienoic acids (HETEs). The protein is Long-chain-fatty-acid--CoA ligase 1 of Cavia porcellus (Guinea pig).